A 503-amino-acid polypeptide reads, in one-letter code: Putative FBD-associated F-box protein At5g56410 (503 aa).

Positions 2–50 (DKITGFSDDELLVKILSFLPTKAAVTTSILSKQWKFLWMRLPKLEYHDD) constitute an F-box domain. In terms of domain architecture, FBD spans 361–412 (FWEQMITSVPQCLLSSLQTFKWLGNGDSIEGKDLATFILRNSCQLKTATISI).

The chain is Putative FBD-associated F-box protein At5g56410 from Arabidopsis thaliana (Mouse-ear cress).